Reading from the N-terminus, the 231-residue chain is 5'-methylthioadenosine/S-adenosylhomocysteine nucleosidase (231 aa).

Glutamate 13 (proton acceptor) is an active-site residue. Substrate is bound by residues glycine 79, methionine 153, and methionine 174 to glutamate 175. Aspartate 198 serves as the catalytic Proton donor.

Belongs to the PNP/UDP phosphorylase family. MtnN subfamily.

It carries out the reaction S-adenosyl-L-homocysteine + H2O = S-(5-deoxy-D-ribos-5-yl)-L-homocysteine + adenine. The catalysed reaction is S-methyl-5'-thioadenosine + H2O = 5-(methylsulfanyl)-D-ribose + adenine. It catalyses the reaction 5'-deoxyadenosine + H2O = 5-deoxy-D-ribose + adenine. It participates in amino-acid biosynthesis; L-methionine biosynthesis via salvage pathway; S-methyl-5-thio-alpha-D-ribose 1-phosphate from S-methyl-5'-thioadenosine (hydrolase route): step 1/2. In terms of biological role, catalyzes the irreversible cleavage of the glycosidic bond in both 5'-methylthioadenosine (MTA) and S-adenosylhomocysteine (SAH/AdoHcy) to adenine and the corresponding thioribose, 5'-methylthioribose and S-ribosylhomocysteine, respectively. Also cleaves 5'-deoxyadenosine, a toxic by-product of radical S-adenosylmethionine (SAM) enzymes, into 5-deoxyribose and adenine. In Halalkalibacterium halodurans (strain ATCC BAA-125 / DSM 18197 / FERM 7344 / JCM 9153 / C-125) (Bacillus halodurans), this protein is 5'-methylthioadenosine/S-adenosylhomocysteine nucleosidase.